We begin with the raw amino-acid sequence, 264 residues long: Ribosomal protein L11 methyltransferase (264 aa).

Positions 116, 137, 159, and 200 each coordinate S-adenosyl-L-methionine.

The protein belongs to the methyltransferase superfamily. PrmA family.

It is found in the cytoplasm. It catalyses the reaction L-lysyl-[protein] + 3 S-adenosyl-L-methionine = N(6),N(6),N(6)-trimethyl-L-lysyl-[protein] + 3 S-adenosyl-L-homocysteine + 3 H(+). Methylates ribosomal protein L11. The sequence is that of Ribosomal protein L11 methyltransferase from Thermotoga petrophila (strain ATCC BAA-488 / DSM 13995 / JCM 10881 / RKU-1).